The chain runs to 724 residues: Hyaluronan mediated motility receptor (724 aa).

Disordered regions lie at residues 1–22 (MSFPKAPLKRFNDPSGCAPSPG) and 40–81 (KSQR…QKND). Residue Ser20 is modified to Phosphoserine. 2 stretches are compositionally biased toward basic and acidic residues: residues 46–60 (QQKESKQNLNVDKDT) and 70–81 (KSSESKESQKND). 4 N-linked (GlcNAc...) asparagine glycosylation sites follow: Asn133, Asn477, Asn567, and Asn588. The required for interaction with FAM83D stretch occupies residues 365–546 (EEMVKEKNLF…ITDLQNQLKQ (182 aa)). Hyaluronic acid-binding stretches follow at residues 635 to 645 (KQKIKHVVKLK) and 657 to 666 (KLRCQLAKKK). Residue Thr703 is modified to Phosphothreonine.

Interacts with ANKRD26. Interacts with DYNLL1. Interacts with FAM83D/CHICA. As to expression, expressed in testis. Expressed in the breast.

The protein resides in the cell surface. The protein localises to the cytoplasm. Its subcellular location is the cytoskeleton. It is found in the spindle. Receptor for hyaluronic acid (HA). Involved in cell motility. When hyaluronan binds to HMMR, the phosphorylation of a number of proteins, including PTK2/FAK1 occurs. May also be involved in cellular transformation and metastasis formation, and in regulating extracellular-regulated kinase (ERK) activity. May act as a regulator of adipogenisis. The protein is Hyaluronan mediated motility receptor (HMMR) of Homo sapiens (Human).